A 537-amino-acid polypeptide reads, in one-letter code: 2-isopropylmalate synthase (537 aa).

One can recognise a Pyruvate carboxyltransferase domain in the interval 8–269 (VLIFDTTLRD…YFNGYLGRAE (262 aa)). Mn(2+)-binding residues include Asp17, His208, His210, and Asn244. The tract at residues 408–537 (QLAGVQVSCG…QRAPLPAPAL (130 aa)) is regulatory domain.

The protein belongs to the alpha-IPM synthase/homocitrate synthase family. LeuA type 1 subfamily. In terms of assembly, homodimer. The cofactor is Mn(2+).

The protein resides in the cytoplasm. It catalyses the reaction 3-methyl-2-oxobutanoate + acetyl-CoA + H2O = (2S)-2-isopropylmalate + CoA + H(+). The protein operates within amino-acid biosynthesis; L-leucine biosynthesis; L-leucine from 3-methyl-2-oxobutanoate: step 1/4. Functionally, catalyzes the condensation of the acetyl group of acetyl-CoA with 3-methyl-2-oxobutanoate (2-ketoisovalerate) to form 3-carboxy-3-hydroxy-4-methylpentanoate (2-isopropylmalate). The polypeptide is 2-isopropylmalate synthase (Synechococcus sp. (strain RCC307)).